A 192-amino-acid chain; its full sequence is ER protein translocation subcomplex subunit sec67 (192 aa).

As to quaternary structure, component of the heterotetrameric Sec62/63complex composed of sec62, sec63, sec66 and sec72. The Sec62/63 complex associates with the Sec61 complex to form the Sec complex.

The protein resides in the cytoplasm. It is found in the nucleus. Its function is as follows. Acts as a non-essential component of the Sec62/63 complex which is involved in SRP-independent post-translational translocation across the endoplasmic reticulum (ER) and functions together with the Sec61 complex and bip1 in a channel-forming translocon complex. A cycle of assembly and disassembly of Sec62/63 complex from sec61 may govern the activity of the translocon. sec72 may be involved in signal peptide recognition for a defined subset of leader peptides, or may increase the efficiency of unusual or 'difficult' secretory precursors to the translocation pore, it may be that this protein binds charged leader peptides to the membrane until they engage the translocation apparatus. The sequence is that of ER protein translocation subcomplex subunit sec67 (sec67) from Schizosaccharomyces pombe (strain 972 / ATCC 24843) (Fission yeast).